We begin with the raw amino-acid sequence, 301 residues long: Porphobilinogen deaminase (301 aa).

Cys-240 carries the S-(dipyrrolylmethanemethyl)cysteine modification.

The protein belongs to the HMBS family. As to quaternary structure, monomer. The cofactor is dipyrromethane.

The catalysed reaction is 4 porphobilinogen + H2O = hydroxymethylbilane + 4 NH4(+). The protein operates within porphyrin-containing compound metabolism; protoporphyrin-IX biosynthesis; coproporphyrinogen-III from 5-aminolevulinate: step 2/4. In terms of biological role, tetrapolymerization of the monopyrrole PBG into the hydroxymethylbilane pre-uroporphyrinogen in several discrete steps. This Clostridioides difficile (strain 630) (Peptoclostridium difficile) protein is Porphobilinogen deaminase.